We begin with the raw amino-acid sequence, 440 residues long: C4-dicarboxylate transport protein (440 aa).

The next 8 helical transmembrane spans lie at 8 to 28, 40 to 60, 74 to 94, 147 to 167, 187 to 207, 221 to 241, 288 to 308, and 354 to 374; these read LYLQ…LFPA, FIKL…VTGI, LKGL…GLVV, GDIL…AALK, IVGF…AFTV, LIAC…GLVL, VVGL…SIYL, and AATL…LLGV. Positions 419–440 are disordered; it reads DEVEPANDPEPPAMAAGLGLHG.

Belongs to the dicarboxylate/amino acid:cation symporter (DAACS) (TC 2.A.23) family.

Its subcellular location is the cell inner membrane. Functionally, responsible for the transport of dicarboxylates such as succinate, fumarate, and malate from the periplasm across the membrane. The chain is C4-dicarboxylate transport protein from Anaeromyxobacter dehalogenans (strain 2CP-C).